A 772-amino-acid polypeptide reads, in one-letter code: Cellulosomal-scaffolding protein B (772 aa).

The region spanning 1 to 80 (DPSKSFDSAI…TTFVAGGVNL (80 aa)) is the Cohesin 1 domain. Residues 81–93 (GSSVPTTQPNVPS) are linker (Pro/Thr-rich). Positions 94 to 240 (DGVVVEIGKV…VNVGNATPTK (147 aa)) constitute a Cohesin 2 domain. A compositionally biased stretch (low complexity) spans 235 to 276 (NATPTKGATPTNTATPTKSATATPPGHSVPTNTPTNTPANTP). 2 disordered regions span residues 235–277 (NATP…NTPV) and 438–464 (VVPS…PSDD). Positions 241-272 (GATPTNTATPTKSATATPPGHSVPTNTPTNTP) are linker (Pro/Thr-rich). One can recognise a CBM3 domain in the interval 277-435 (VSGNLKVEFY…GVLVWGKEPG (159 aa)). Residues 438–461 (VVPSTQPVTTPPATTKPPATTIPP) are compositionally biased toward low complexity. Positions 440–461 (PSTQPVTTPPATTKPPATTIPP) are linker (Pro/Thr-rich). The Cohesin 3 domain occupies 462 to 607 (SDDPNAIKIK…ETDLINGGVL (146 aa)). Residues 704–771 (IMMWVGDIVK…FGATSSDYDA (68 aa)) enclose the Dockerin domain.

O-glycosylated on most but not all Thr residues of the linker units.

The protein resides in the secreted. Functionally, acts as a scaffolding protein in the cellulosome. It promotes binding of cellulose to the catalytic domains of the cellulolytic enzymes probably through the binding of the nine repeated domains with dockerin domains present in catalytic subunits of the cellulosome. This is Cellulosomal-scaffolding protein B (cipB) from Acetivibrio thermocellus (Hungateiclostridium thermocellum).